A 249-amino-acid chain; its full sequence is 3-deoxy-manno-octulosonate cytidylyltransferase (249 aa).

Belongs to the KdsB family.

The protein localises to the cytoplasm. It carries out the reaction 3-deoxy-alpha-D-manno-oct-2-ulosonate + CTP = CMP-3-deoxy-beta-D-manno-octulosonate + diphosphate. Its pathway is nucleotide-sugar biosynthesis; CMP-3-deoxy-D-manno-octulosonate biosynthesis; CMP-3-deoxy-D-manno-octulosonate from 3-deoxy-D-manno-octulosonate and CTP: step 1/1. It participates in bacterial outer membrane biogenesis; lipopolysaccharide biosynthesis. Functionally, activates KDO (a required 8-carbon sugar) for incorporation into bacterial lipopolysaccharide in Gram-negative bacteria. This chain is 3-deoxy-manno-octulosonate cytidylyltransferase, found in Coxiella burnetii (strain CbuG_Q212) (Coxiella burnetii (strain Q212)).